Consider the following 760-residue polypeptide: GLC7-interacting protein 4 (760 aa).

Disordered regions lie at residues 449–573 and 593–626; these read KKKP…SLQS and KSAS…SSST. Low complexity-rich tracts occupy residues 454–474 and 494–506; these read ITKL…ASPS and SSRS…VRTT. Phosphoserine occurs at positions 497 and 501. Residues 512–525 are compositionally biased toward basic and acidic residues; it reads AETKKSVVSPEKRK. Residues 534–554 show a composition bias toward polar residues; the sequence is SSSLQSYTNKQQTSYLNSTRH. Low complexity-rich tracts occupy residues 561 to 573 and 594 to 626; these read SKLN…SLQS and SAST…SSST. Phosphoserine is present on S609.

Belongs to the GIP4 family. In terms of assembly, interacts with GLC7.

It is found in the cytoplasm. Its function is as follows. GLC7 phosphatase-regulatory protein involved in GLC7 subcellular redistribution and chromosome segregation. The chain is GLC7-interacting protein 4 (GIP4) from Saccharomyces cerevisiae (strain ATCC 204508 / S288c) (Baker's yeast).